A 1068-amino-acid chain; its full sequence is Phosphatidylinositol 4,5-bisphosphate 3-kinase catalytic subunit alpha isoform (1068 aa).

The PI3K-ABD domain occupies 16-105 (MPPRILVECL…QPFLKVIEPV (90 aa)). The region spanning 187-289 (KGQIIVVIWV…GRMPNLMLMA (103 aa)) is the PI3K-RBD domain. The C2 PI3K-type domain occupies 330–487 (INSALRIKIL…DWFSSVVKFP (158 aa)). Positions 517–694 (LARDNELREN…GLLLESYCRA (178 aa)) constitute a PIK helical domain. In terms of domain architecture, PI3K/PI4K catalytic spans 765–1051 (RLEECRIMSS…QMNDAHHGGW (287 aa)). Residues 771 to 777 (IMSSAKR) form a G-loop region. The catalytic loop stretch occupies residues 912-920 (GIGDRHNSN). The tract at residues 931–957 (HIDFGHFLDHKKKKFGYKRERVPFVLT) is activation loop.

Belongs to the PI3/PI4-kinase family. In terms of assembly, heterodimer of a catalytic subunit PIK3CA and a p85 regulatory subunit (PIK3R1, PIK3R2 or PIK3R3). Interacts with IRS1 in nuclear extracts. Interacts with RUFY3. Interacts with RASD2. Interacts with APPL1. Interacts with HRAS and KRAS. Interaction with HRAS/KRAS is required for PI3K pathway signaling and cell proliferation stimulated by EGF and FGF2. Interacts with FAM83B; activates the PI3K/AKT signaling cascade.

The catalysed reaction is L-seryl-[protein] + ATP = O-phospho-L-seryl-[protein] + ADP + H(+). It catalyses the reaction a 1,2-diacyl-sn-glycero-3-phospho-(1D-myo-inositol) + ATP = a 1,2-diacyl-sn-glycero-3-phospho-(1D-myo-inositol-3-phosphate) + ADP + H(+). The enzyme catalyses a 1,2-diacyl-sn-glycero-3-phospho-(1D-myo-inositol-4,5-bisphosphate) + ATP = a 1,2-diacyl-sn-glycero-3-phospho-(1D-myo-inositol-3,4,5-trisphosphate) + ADP + H(+). It carries out the reaction 1,2-dioctanoyl-sn-glycero-3-phospho-(1D-myo-inositol-4,5-bisphosphate) + ATP = 1,2-dioctanoyl-sn-glycero-3-phospho-(1D-myo-inositol-3,4,5-trisphosphate) + ADP + H(+). The catalysed reaction is 1-octadecanoyl-2-(5Z,8Z,11Z,14Z)-eicosatetraenoyl-sn-glycero-3-phospho-1D-myo-inositol 4,5-bisphosphate + ATP = 1-octadecanoyl-2-(5Z,8Z,11Z,14Z-eicosatetraenoyl)-sn-glycero-3-phospho-(1D-myo-inositol 3,4,5-triphosphate) + ADP + H(+). The protein operates within phospholipid metabolism; phosphatidylinositol phosphate biosynthesis. Its function is as follows. Phosphoinositide-3-kinase (PI3K) phosphorylates phosphatidylinositol (PI) and its phosphorylated derivatives at position 3 of the inositol ring to produce 3-phosphoinositides. Uses ATP and PtdIns(4,5)P2 (phosphatidylinositol 4,5-bisphosphate) to generate phosphatidylinositol 3,4,5-trisphosphate (PIP3). PIP3 plays a key role by recruiting PH domain-containing proteins to the membrane, including AKT1 and PDPK1, activating signaling cascades involved in cell growth, survival, proliferation, motility and morphology. Participates in cellular signaling in response to various growth factors. Involved in the activation of AKT1 upon stimulation by receptor tyrosine kinases ligands such as EGF, insulin, IGF1, VEGFA and PDGF. Involved in signaling via insulin-receptor substrate (IRS) proteins. Essential in endothelial cell migration during vascular development through VEGFA signaling, possibly by regulating RhoA activity. Required for lymphatic vasculature development, possibly by binding to RAS and by activation by EGF and FGF2, but not by PDGF. Regulates invadopodia formation through the PDPK1-AKT1 pathway. Participates in cardiomyogenesis in embryonic stem cells through a AKT1 pathway. Participates in vasculogenesis in embryonic stem cells through PDK1 and protein kinase C pathway. In addition to its lipid kinase activity, it displays a serine-protein kinase activity that results in the autophosphorylation of the p85alpha regulatory subunit as well as phosphorylation of other proteins such as 4EBP1, H-Ras, the IL-3 beta c receptor and possibly others. Plays a role in the positive regulation of phagocytosis and pinocytosis. In Bos taurus (Bovine), this protein is Phosphatidylinositol 4,5-bisphosphate 3-kinase catalytic subunit alpha isoform (PIK3CA).